A 76-amino-acid chain; its full sequence is DNA-directed RNA polymerase subunit epsilon (76 aa).

It belongs to the RNA polymerase subunit epsilon family. RNAP is composed of a core of 2 alpha, a beta and a beta' subunit. The core is associated with a delta subunit, and at least one of epsilon or omega. When a sigma factor is associated with the core the holoenzyme is formed, which can initiate transcription.

The enzyme catalyses RNA(n) + a ribonucleoside 5'-triphosphate = RNA(n+1) + diphosphate. Functionally, a non-essential component of RNA polymerase (RNAP). This chain is DNA-directed RNA polymerase subunit epsilon, found in Streptococcus agalactiae serotype Ia (strain ATCC 27591 / A909 / CDC SS700).